We begin with the raw amino-acid sequence, 384 residues long: Methyl-CpG-binding domain-containing protein 10 (384 aa).

The 71-residue stretch at 4-74 (TDELVSIELP…SEFEWTTGET (71 aa)) folds into the MBD domain. Positions 65-384 (SEFEWTTGET…QQGAAASVSC (320 aa)) are disordered. Polar residues predominate over residues 80–91 (RISQKVKATTPT). Residues 100 to 224 (KRRSSLTKKD…MEVDTSELEK (125 aa)) adopt a coiled-coil conformation. Basic and acidic residues-rich tracts occupy residues 106–227 (TKKD…KKAG), 234–250 (EPSKVEGLKDTEMKEAQ), and 257–269 (DVEKKPAEEKTEN). Over residues 270-284 (KGSVTTEANGEQNVT) the composition is skewed to polar residues. Residues 295–365 (EADKGKESKE…NDMKAEDTNR (71 aa)) are compositionally biased toward basic and acidic residues. Residues 310 to 356 (TEAEANKENDTQESDEKKTEAAANKENETQESDVKKTEAAVAEEKSN) adopt a coiled-coil conformation. Ser323 carries the post-translational modification Phosphoserine. The segment covering 369–384 (ANQVQQQQGAAASVSC) has biased composition (low complexity).

Expressed in leaves, buds, flowers, stems and siliques.

It localises to the nucleus. Probable transcriptional regulator. Required for nucleolar dominance that consist in the silencing of rRNA genes inherited from one progenitor in genetic hybrids. The polypeptide is Methyl-CpG-binding domain-containing protein 10 (MBD10) (Arabidopsis thaliana (Mouse-ear cress)).